We begin with the raw amino-acid sequence, 787 residues long: Integrin beta-6 (787 aa).

The signal sequence occupies residues 1-21 (MGIELVCLFLLLLGRNDHVQG). Residues 22–71 (GCAWSGAETCSDCLLTGPHCAWCSQENFTHLSGAGERCDTPENLLAKGCQ) enclose the PSI domain. Over 22–708 (GCAWSGAETC…KDCPKPPNIP (687 aa)) the chain is Extracellular. 19 cysteine pairs are disulfide-bonded: Cys23–Cys41, Cys31–Cys454, Cys34–Cys59, Cys44–Cys70, Cys197–Cys204, Cys252–Cys293, Cys394–Cys406, Cys426–Cys452, Cys456–Cys476, Cys467–Cys479, Cys481–Cys490, Cys492–Cys519, Cys502–Cys517, Cys511–Cys522, Cys524–Cys537, Cys539–Cys560, Cys544–Cys558, Cys552–Cys563, and Cys565–Cys574. N-linked (GlcNAc...) asparagine glycosylation is found at Asn48 and Asn97. Positions 131–371 (YPVDLYYLMD…QLIISAYEEL (241 aa)) constitute a VWFA domain. Residues Asp140, Ser142, and Ser144 each contribute to the Mg(2+) site. Ser144, Asp147, Asp148, and Glu179 together coordinate Ca(2+). Positions 235, 237, 239, and 240 each coordinate Ca(2+). Residue Glu240 participates in Mg(2+) binding. Asn260 carries N-linked (GlcNAc...) asparagine glycosylation. Residues Asp271 and Lys355 each coordinate Ca(2+). Residue Asn387 is glycosylated (N-linked (GlcNAc...) asparagine). Asn418 carries N-linked (GlcNAc...) asparagine glycosylation. 4 I-EGF domains span residues 456–491 (CQRE…PRCE), 492–538 (CGED…PYCQ), 539–575 (CDNF…EYCN), and 576–615 (CTTS…PTCE). Asn463 and Asn471 each carry an N-linked (GlcNAc...) asparagine glycan. Asn541 is a glycosylation site (N-linked (GlcNAc...) asparagine). Asn575 carries an N-linked (GlcNAc...) asparagine glycan. Cystine bridges form between Cys576–Cys599, Cys583–Cys597, Cys591–Cys602, Cys604–Cys614, Cys617–Cys620, Cys624–Cys669, Cys630–Cys649, Cys633–Cys645, and Cys677–Cys701. Asn695 is a glycosylation site (N-linked (GlcNAc...) asparagine). A helical membrane pass occupies residues 709–729 (MIMLGVSLAILLIGVVLLCIW). The tract at residues 730-757 (KLLVSFHDRKEVAKFEAERSKAKWQTGT) is interaction with HAX1. At 730 to 787 (KLLVSFHDRKEVAKFEAERSKAKWQTGTNPLYRGSTSTFKNVTYKHREKHKVGLSSDG) the chain is on the cytoplasmic side.

Belongs to the integrin beta chain family. Heterodimer of an alpha and a beta subunit. Interacts with FLNB. Interacts with HAX1. ITGAV:ITGB6 interacts with FBN1. ITGAV:ITGB6 interacts with TGFB1.

It is found in the cell membrane. It localises to the cell junction. The protein localises to the focal adhesion. Integrin alpha-V:beta-6 (ITGAV:ITGB6) is a receptor for fibronectin and cytotactin. It recognizes the sequence R-G-D in its ligands. ITGAV:ITGB6 acts as a receptor for fibrillin-1 (FBN1) and mediates R-G-D-dependent cell adhesion to FBN1. Integrin alpha-V:beta-6 (ITGAV:ITGB6) mediates R-G-D-dependent release of transforming growth factor beta-1 (TGF-beta-1) from regulatory Latency-associated peptide (LAP), thereby playing a key role in TGF-beta-1 activation. In Rattus norvegicus (Rat), this protein is Integrin beta-6 (Itgb6).